The primary structure comprises 352 residues: MSILAEKLSSILKRYDELTALLSSAEVINDIKKLTELSKEQSSIEEISVASKEYLSVLENIKENKELLEDKELSELAKEELKILEIKKSELETTIKQLLIPKDPNDDKNIYLELRAGTGGDEAGIFVGDLFKAYCRYADLKKWKVEIVSSSENSVGGYKEIIALIKGKGVYSRLKFEAGTHRVQRVPETESQGRIHTSAITVAIMPEVDDVEISINPSDLKIEVFRAGGHGGQCVNTTDSAVRITHLPTNISVSMQDEKSQHKNKDKALKILKARLYEKQIEEQQLANAKDRKEQVGSGDRSERIRTYNYPQNRLSEHRINLTLYSLEEIMLSGNLDEVINPLIAHAQSQFE.

Gln-233 is modified (N5-methylglutamine). Positions 288–309 are disordered; it reads NAKDRKEQVGSGDRSERIRTYN. The span at 289 to 306 shows a compositional bias: basic and acidic residues; it reads AKDRKEQVGSGDRSERIR.

It belongs to the prokaryotic/mitochondrial release factor family. Post-translationally, methylated by PrmC. Methylation increases the termination efficiency of RF1.

The protein localises to the cytoplasm. Its function is as follows. Peptide chain release factor 1 directs the termination of translation in response to the peptide chain termination codons UAG and UAA. In Helicobacter acinonychis (strain Sheeba), this protein is Peptide chain release factor 1.